The sequence spans 444 residues: MRELVHIQGGQCGNQIGAKFWEVISDEHGVDPTGSYHGDSDLQLERINVYYNEATGGRYVPRAILMDLEPGTMDSVRAGPYGQLFRPDNFVFGQTGAGNNWAKGHYTEGAELIDSVLDVVRKEAESCDCLQGFQITHSLGGGTGSGMGTLLISKIREEYPDRIMCTYSVCPSPKVSDTVVEPYNATLSVHQLVENADEVMCLDNEALYDICFRTLKLTNPTYGDLNHLVCAAMSGITTCLRFPGQLNSVLKLFAVNLIPFPRLHFFMIGFAPLTSRGSQQYRALTVPELTQQQFDAKNMMCAADPRHGRYLTAACMFRGRMSTKEVDEQMLNVQNKNSSYFVEWIPNNIKASVCDIPPQGLKMSTTFIGNSTAIQEMFKRVSEQFTAMFRRKAFLHWYTGEGMDEMEFTEAESNMNDLVSEYQQYQDGTAEEEGEFDEDEEWMR.

GTP-binding residues include glutamine 11, glutamate 69, serine 138, glycine 142, threonine 143, glycine 144, asparagine 204, and asparagine 226. Glutamate 69 provides a ligand contact to Mg(2+).

This sequence belongs to the tubulin family. Dimer of alpha and beta chains. A typical microtubule is a hollow water-filled tube with an outer diameter of 25 nm and an inner diameter of 15 nM. Alpha-beta heterodimers associate head-to-tail to form protofilaments running lengthwise along the microtubule wall with the beta-tubulin subunit facing the microtubule plus end conferring a structural polarity. Microtubules usually have 13 protofilaments but different protofilament numbers can be found in some organisms and specialized cells. Mg(2+) serves as cofactor.

It localises to the cytoplasm. The protein resides in the cytoskeleton. In terms of biological role, tubulin is the major constituent of microtubules, a cylinder consisting of laterally associated linear protofilaments composed of alpha- and beta-tubulin heterodimers. Microtubules grow by the addition of GTP-tubulin dimers to the microtubule end, where a stabilizing cap forms. Below the cap, tubulin dimers are in GDP-bound state, owing to GTPase activity of alpha-tubulin. This chain is Tubulin beta chain, found in Phytophthora cinnamomi (Cinnamon fungus).